A 530-amino-acid polypeptide reads, in one-letter code: MFS transporter PfmaC (530 aa).

The segment at 41–76 (TTAVSDGDNQSSTMSGKTAAGDATSPASGSGSGGWF) is disordered. Over residues 42-56 (TAVSDGDNQSSTMSG) the composition is skewed to polar residues. The segment covering 59–69 (AAGDATSPASG) has biased composition (low complexity). The next 10 membrane-spanning stretches (helical) occupy residues 165 to 182 (YWLP…LGMY), 195 to 215 (FFIG…LGCW), 226 to 246 (ALFV…QAAL), 261 to 281 (WLFI…LFCF), 324 to 344 (IFTS…SLTV), 369 to 389 (NIPT…GFVS), 396 to 416 (GPVC…FTAW), 422 to 442 (LLMA…LLAG), 456 to 476 (AFIL…FQQL), and 493 to 513 (PSAL…IPLL).

The protein belongs to the major facilitator superfamily. Allantoate permease family.

The protein resides in the cell membrane. Functionally, MFS transporter; part of the gene cluster that mediates the biosynthesis of dihydroxynaphthalene (DHN)-melanin, a bluish-green pigment forming a dark layer in the conidial wall that protects the conidia from UV radiations. The chain is MFS transporter PfmaC from Pestalotiopsis fici (strain W106-1 / CGMCC3.15140).